Consider the following 296-residue polypeptide: 33 kDa chaperonin (296 aa).

Disulfide bonds link Cys238-Cys240 and Cys271-Cys274.

Belongs to the HSP33 family. In terms of processing, under oxidizing conditions two disulfide bonds are formed involving the reactive cysteines. Under reducing conditions zinc is bound to the reactive cysteines and the protein is inactive.

The protein resides in the cytoplasm. Functionally, redox regulated molecular chaperone. Protects both thermally unfolding and oxidatively damaged proteins from irreversible aggregation. Plays an important role in the bacterial defense system toward oxidative stress. This chain is 33 kDa chaperonin, found in Clostridium botulinum (strain ATCC 19397 / Type A).